An 870-amino-acid chain; its full sequence is Lon protease (870 aa).

The 270-residue stretch at 1-270 (MPTNSYRFLV…KLYEHIHTFA (270 aa)) folds into the Lon N-terminal domain. 454 to 461 (GPPGTGKT) lines the ATP pocket. Residues 691-870 (SPQIGTVTGL…YQQIYDFIFK (180 aa)) enclose the Lon proteolytic domain. Active-site residues include S777 and K820.

This sequence belongs to the peptidase S16 family. In terms of assembly, homohexamer. Organized in a ring with a central cavity.

The protein resides in the cytoplasm. The enzyme catalyses Hydrolysis of proteins in presence of ATP.. ATP-dependent serine protease that mediates the selective degradation of mutant and abnormal proteins as well as certain short-lived regulatory proteins. Required for cellular homeostasis and for survival from DNA damage and developmental changes induced by stress. Degrades polypeptides processively to yield small peptide fragments that are 5 to 10 amino acids long. Binds to DNA in a double-stranded, site-specific manner. The chain is Lon protease from Mesomycoplasma hyopneumoniae (strain 232) (Mycoplasma hyopneumoniae).